A 582-amino-acid chain; its full sequence is Probable DNA ligase (582 aa).

E243 serves as a coordination point for ATP. The N6-AMP-lysine intermediate role is filled by K245. Residues R250, R265, E295, F335, R410, and K416 each contribute to the ATP site.

Belongs to the ATP-dependent DNA ligase family. Requires Mg(2+) as cofactor.

It catalyses the reaction ATP + (deoxyribonucleotide)n-3'-hydroxyl + 5'-phospho-(deoxyribonucleotide)m = (deoxyribonucleotide)n+m + AMP + diphosphate.. Its function is as follows. DNA ligase that seals nicks in double-stranded DNA during DNA replication, DNA recombination and DNA repair. The polypeptide is Probable DNA ligase (Dictyoglomus thermophilum (strain ATCC 35947 / DSM 3960 / H-6-12)).